Reading from the N-terminus, the 650-residue chain is Chaperone protein DnaK (650 aa).

The residue at position 200 (Thr-200) is a Phosphothreonine; by autocatalysis. Residues 611 to 636 (AQQAGAAGAAGAAEGAAHAGGAQQAA) show a composition bias toward low complexity. A disordered region spans residues 611-637 (AQQAGAAGAAGAAEGAAHAGGAQQAAD).

Belongs to the heat shock protein 70 family.

Acts as a chaperone. This chain is Chaperone protein DnaK, found in Burkholderia ambifaria (strain MC40-6).